Here is a 273-residue protein sequence, read N- to C-terminus: Formamidopyrimidine-DNA glycosylase (273 aa).

The active-site Schiff-base intermediate with DNA is the proline 2. The active-site Proton donor is glutamate 3. Catalysis depends on lysine 58, which acts as the Proton donor; for beta-elimination activity. Residues histidine 91, arginine 110, and arginine 153 each coordinate DNA. The segment at 238–272 (KVYGKEGQPCPRCGEDFVKIKISGRGTTYCLHCQK) adopts an FPG-type zinc-finger fold. The active-site Proton donor; for delta-elimination activity is arginine 262.

The protein belongs to the FPG family. In terms of assembly, monomer. Requires Zn(2+) as cofactor.

It carries out the reaction Hydrolysis of DNA containing ring-opened 7-methylguanine residues, releasing 2,6-diamino-4-hydroxy-5-(N-methyl)formamidopyrimidine.. The enzyme catalyses 2'-deoxyribonucleotide-(2'-deoxyribose 5'-phosphate)-2'-deoxyribonucleotide-DNA = a 3'-end 2'-deoxyribonucleotide-(2,3-dehydro-2,3-deoxyribose 5'-phosphate)-DNA + a 5'-end 5'-phospho-2'-deoxyribonucleoside-DNA + H(+). Its function is as follows. Involved in base excision repair of DNA damaged by oxidation or by mutagenic agents. Acts as a DNA glycosylase that recognizes and removes damaged bases. Has a preference for oxidized purines, such as 7,8-dihydro-8-oxoguanine (8-oxoG). Has AP (apurinic/apyrimidinic) lyase activity and introduces nicks in the DNA strand. Cleaves the DNA backbone by beta-delta elimination to generate a single-strand break at the site of the removed base with both 3'- and 5'-phosphates. The polypeptide is Formamidopyrimidine-DNA glycosylase (Lactobacillus delbrueckii subsp. bulgaricus (strain ATCC 11842 / DSM 20081 / BCRC 10696 / JCM 1002 / NBRC 13953 / NCIMB 11778 / NCTC 12712 / WDCM 00102 / Lb 14)).